The primary structure comprises 334 residues: Galactinol synthase 4 (334 aa).

The active site involves lysine 104. 3 residues coordinate Mn(2+): aspartate 120, aspartate 122, and histidine 258.

The protein belongs to the glycosyltransferase 8 family. Galactosyltransferase subfamily. Requires a divalent metal cation as cofactor.

Its subcellular location is the cytoplasm. It carries out the reaction myo-inositol + UDP-alpha-D-galactose = alpha-D-galactosyl-(1-&gt;3)-1D-myo-inositol + UDP + H(+). Its function is as follows. Galactinol synthase involved in the biosynthesis of raffinose family oligosaccharides (RFOs) that function as osmoprotectants. May promote plant stress tolerance. The protein is Galactinol synthase 4 (GOLS4) of Arabidopsis thaliana (Mouse-ear cress).